Here is a 261-residue protein sequence, read N- to C-terminus: MYKDLEGKVVVITGSSTGLGKSMAIRFATEKAKVVVNYRSKEDEANSVLEEIKKVGGEAIAVKGDVTVESDVINLVQSAIKEFGKLDVMINNAGLENPVSSHEMSLSDWNKVIDTNLTGAFLGSREAIKYFVENDIKGTVINMSSVHEKIPWPLFVHYAASKGGMKLMTETLALEYAPKGIRVNNIGPGAINTPINAEKFADPEQRADVESMIPMGYIGEPEEIAAVAAWLASSEASYVTGITLFADGGMTQYPSFQAGRG.

11–35 lines the NADP(+) pocket; it reads VITGSSTGLGKSMAIRFATEKAKVV. Ser-145 is a binding site for substrate. Tyr-158 functions as the Proton acceptor in the catalytic mechanism.

It belongs to the short-chain dehydrogenases/reductases (SDR) family. Homotetramer.

The catalysed reaction is D-glucose + NAD(+) = D-glucono-1,5-lactone + NADH + H(+). It carries out the reaction D-glucose + NADP(+) = D-glucono-1,5-lactone + NADPH + H(+). The chain is Glucose 1-dehydrogenase from Priestia megaterium (Bacillus megaterium).